A 244-amino-acid polypeptide reads, in one-letter code: Protein TIFY 10b (244 aa).

Residues 97–132 form the Tify domain; the sequence is QEPEKRQLTIFYGGKVLVFNDFPADKAKGLMQLASK. The short motif at 185 to 210 is the Jas element; sequence PIARKASLHRFLEKRKDRLNAKTPYQ. A Nuclear localization signal motif is present at residues 187 to 194; the sequence is ARKASLHR. A disordered region spans residues 193–244; sequence HRFLEKRKDRLNAKTPYQASPSDATPVKKEPESQPWLGLGPNAVVKPIERGQ. Residues 194–204 are compositionally biased toward basic and acidic residues; the sequence is RFLEKRKDRLN.

The protein belongs to the TIFY/JAZ family. Post-translationally, ubiquitinated. Targeted for degradation by the SCF(COI1) E3 ubiquitin ligase-proteasome pathway during jasmonate signaling.

The protein resides in the nucleus. Its function is as follows. Repressor of jasmonate responses. The polypeptide is Protein TIFY 10b (Oryza sativa subsp. indica (Rice)).